A 397-amino-acid polypeptide reads, in one-letter code: Serpin B10 (397 aa).

The Nuclear localization signal motif lies at 74 to 77 (KKRK).

This sequence belongs to the serpin family. Ov-serpin subfamily.

The protein resides in the nucleus. The protein localises to the cytoplasm. Functionally, protease inhibitor that may play a role in the regulation of protease activities during hematopoiesis and apoptosis induced by TNF. May regulate protease activities in the cytoplasm and in the nucleus. In Plecturocebus moloch (Dusky titi monkey), this protein is Serpin B10 (SERPINB10).